A 396-amino-acid chain; its full sequence is 1-deoxy-D-xylulose 5-phosphate reductoisomerase (396 aa).

Residues Thr-15, Gly-16, Ser-17, Ile-18, Gly-41, and Asn-129 each contribute to the NADPH site. Lys-130 contacts 1-deoxy-D-xylulose 5-phosphate. Residue Glu-131 coordinates NADPH. Asp-155 is a Mn(2+) binding site. Ser-156, Glu-157, Ser-182, and His-205 together coordinate 1-deoxy-D-xylulose 5-phosphate. Glu-157 contacts Mn(2+). Position 211 (Gly-211) interacts with NADPH. Residues Ser-218, Asn-223, Lys-224, and Glu-227 each contribute to the 1-deoxy-D-xylulose 5-phosphate site. Glu-227 provides a ligand contact to Mn(2+).

The protein belongs to the DXR family. Requires Mg(2+) as cofactor. Mn(2+) is required as a cofactor.

The catalysed reaction is 2-C-methyl-D-erythritol 4-phosphate + NADP(+) = 1-deoxy-D-xylulose 5-phosphate + NADPH + H(+). Its pathway is isoprenoid biosynthesis; isopentenyl diphosphate biosynthesis via DXP pathway; isopentenyl diphosphate from 1-deoxy-D-xylulose 5-phosphate: step 1/6. Catalyzes the NADPH-dependent rearrangement and reduction of 1-deoxy-D-xylulose-5-phosphate (DXP) to 2-C-methyl-D-erythritol 4-phosphate (MEP). This Xanthomonas oryzae pv. oryzae (strain PXO99A) protein is 1-deoxy-D-xylulose 5-phosphate reductoisomerase.